The chain runs to 486 residues: Glutamyl-tRNA(Gln) amidotransferase subunit A (486 aa).

Catalysis depends on charge relay system residues lysine 74 and serine 149. Serine 173 acts as the Acyl-ester intermediate in catalysis.

The protein belongs to the amidase family. GatA subfamily. As to quaternary structure, heterotrimer of A, B and C subunits.

It catalyses the reaction L-glutamyl-tRNA(Gln) + L-glutamine + ATP + H2O = L-glutaminyl-tRNA(Gln) + L-glutamate + ADP + phosphate + H(+). Its function is as follows. Allows the formation of correctly charged Gln-tRNA(Gln) through the transamidation of misacylated Glu-tRNA(Gln) in organisms which lack glutaminyl-tRNA synthetase. The reaction takes place in the presence of glutamine and ATP through an activated gamma-phospho-Glu-tRNA(Gln). In Prochlorococcus marinus (strain MIT 9313), this protein is Glutamyl-tRNA(Gln) amidotransferase subunit A.